The following is a 430-amino-acid chain: Centrosomal protein CEP57L1 (430 aa).

At Ser45 the chain carries Phosphoserine. Residues 46 to 213 are a coiled coil; the sequence is PNNQALVSAL…HQRRLFQDRA (168 aa). Disordered regions lie at residues 248–290 and 362–430; these read CLKR…GEPF and RKLQ…KWEQ. Basic and acidic residues-rich tracts occupy residues 249-272, 362-372, and 421-430; these read LKREPPQHTDCRFRGPASERERPP, RKLQEKVENSR, and LRRDDVKWEQ. A coiled-coil region spans residues 290-377; sequence FSICDNLSEL…VENSRINESS (88 aa).

It belongs to the translokin family.

It localises to the cytoplasm. It is found in the cytoskeleton. The protein localises to the microtubule organizing center. The protein resides in the centrosome. Centrosomal protein which may be required for microtubule attachment to centrosomes. This chain is Centrosomal protein CEP57L1 (Cep57l1), found in Rattus norvegicus (Rat).